The primary structure comprises 271 residues: Calretinin (271 aa).

EF-hand domains are found at residues 16 to 51 (LTAS…LEKA), 63 to 98 (NFGE…EENF), 107 to 142 (GSSA…LLKK), 151 to 186 (KLQE…QENF), 195 to 230 (LTSE…LYEK), and 235 to 270 (MNIQ…SEPP). Ca(2+) contacts are provided by D29, D31, N33, Y35, E40, D76, N78, D80, K82, E87, D120, D122, S124, Y126, E131, D164, N166, D168, K170, E175, D208, D210, S212, Y214, and E219. The residue at position 214 (Y214) is a Phosphotyrosine.

The protein belongs to the calbindin family.

It localises to the synapse. The protein resides in the cell projection. The protein localises to the dendrite. Calcium-binding protein involved in calcium homeostasis and signal transduction. It plays a critical role in buffering intracellular calcium levels and modulating calcium-dependent signaling pathways. Predominantly expressed in specific neuronal populations, influences synaptic plasticity and neuronal excitability, contributing to learning and memory. During embryonic development, it facilitates neuronal differentiation and maturation. This is Calretinin (Calb2) from Rattus norvegicus (Rat).